We begin with the raw amino-acid sequence, 246 residues long: tRNA (guanine-N(7)-)-methyltransferase (246 aa).

S-adenosyl-L-methionine is bound by residues E76, E101, D128, and D151. The active site involves D151. K155 contacts substrate. Residues 157 to 162 are interaction with RNA; it reads RHNKRR. Substrate is bound by residues D187 and 222–225; that span reads TKFE.

This sequence belongs to the class I-like SAM-binding methyltransferase superfamily. TrmB family.

It catalyses the reaction guanosine(46) in tRNA + S-adenosyl-L-methionine = N(7)-methylguanosine(46) in tRNA + S-adenosyl-L-homocysteine. It functions in the pathway tRNA modification; N(7)-methylguanine-tRNA biosynthesis. In terms of biological role, catalyzes the formation of N(7)-methylguanine at position 46 (m7G46) in tRNA. In Dechloromonas aromatica (strain RCB), this protein is tRNA (guanine-N(7)-)-methyltransferase.